Consider the following 535-residue polypeptide: CTP synthase (535 aa).

The interval 1–266 (MKTKFIFITG…DEQVVEKLNI (266 aa)) is amidoligase domain. Residue Ser-14 coordinates CTP. Ser-14 contributes to the UTP binding site. Residues 15–20 (SIGKGL) and Asp-72 each bind ATP. Asp-72 and Glu-140 together coordinate Mg(2+). Residues 147 to 149 (DIE), 187 to 192 (KTKPTQ), and Lys-223 each bind CTP. UTP-binding positions include 187-192 (KTKPTQ) and Lys-223. One can recognise a Glutamine amidotransferase type-1 domain in the interval 292–534 (RIAIVGKYVN…IGASLTHRNQ (243 aa)). Gly-354 is a binding site for L-glutamine. The active-site Nucleophile; for glutamine hydrolysis is the Cys-381. L-glutamine is bound by residues 382-385 (LGMQ), Glu-405, and Arg-462. Residues His-507 and Glu-509 contribute to the active site.

This sequence belongs to the CTP synthase family. In terms of assembly, homotetramer.

The enzyme catalyses UTP + L-glutamine + ATP + H2O = CTP + L-glutamate + ADP + phosphate + 2 H(+). It carries out the reaction L-glutamine + H2O = L-glutamate + NH4(+). The catalysed reaction is UTP + NH4(+) + ATP = CTP + ADP + phosphate + 2 H(+). The protein operates within pyrimidine metabolism; CTP biosynthesis via de novo pathway; CTP from UDP: step 2/2. With respect to regulation, allosterically activated by GTP, when glutamine is the substrate; GTP has no effect on the reaction when ammonia is the substrate. The allosteric effector GTP functions by stabilizing the protein conformation that binds the tetrahedral intermediate(s) formed during glutamine hydrolysis. Inhibited by the product CTP, via allosteric rather than competitive inhibition. Catalyzes the ATP-dependent amination of UTP to CTP with either L-glutamine or ammonia as the source of nitrogen. Regulates intracellular CTP levels through interactions with the four ribonucleotide triphosphates. The protein is CTP synthase of Trichlorobacter lovleyi (strain ATCC BAA-1151 / DSM 17278 / SZ) (Geobacter lovleyi).